The primary structure comprises 444 residues: Coagulation factor VII (444 aa).

The first 21 residues, 1 to 21 (MAPQARGLGLCSLLALQASLA), serve as a signal peptide directing secretion. The propeptide occupies 22 to 39 (AVFITQEEAHSVLRRQRR). The Gla domain maps to 40 to 84 (ANSFLEELRPGSLERECKEELCSFEEAREVFQSTERTKQFWITYN). 4-carboxyglutamate occurs at positions 45, 46, 53, 55, 58, 59, 64, 65, 68, and 74. A disulfide bridge connects residues Cys56 and Cys61. In terms of domain architecture, EGF-like 1; calcium-binding spans 85-121 (DGDQCASNPCQNGGSCEDQIQSYICFCLADFEGRNCE). Intrachain disulfides connect Cys89/Cys100, Cys94/Cys109, Cys111/Cys120, Cys130/Cys141, Cys137/Cys151, Cys153/Cys166, Cys174/Cys301, Cys198/Cys203, and Cys217/Cys233. An O-linked (Glc...) serine; alternate glycan is attached at Ser91. O-linked (Xyl...) serine; alternate glycosylation is present at Ser91. A glycan (O-linked (Fuc) serine) is linked at Ser99. Asp102 is subject to (3R)-3-hydroxyaspartate. The 42-residue stretch at 126 to 167 (DQLICMYENGGCEQYCSDHVGSQRSCRCHEGYTLLPNGVSCT) folds into the EGF-like 2 domain. Positions 192-431 (IVGGKVCPKG…YTEWLSRLMR (240 aa)) constitute a Peptidase S1 domain. Residue Asn211 is glycosylated (N-linked (GlcNAc...) asparagine). Residue His232 is the Charge relay system of the active site. Asn242 carries N-linked (GlcNAc...) asparagine glycosylation. Residue Asp281 is the Charge relay system of the active site. Residue Asn306 is glycosylated (N-linked (GlcNAc...) asparagine). A disulfide bridge connects residues Cys349 and Cys368. Residue Asp377 coordinates substrate. Residues Cys379 and Cys407 are joined by a disulfide bond. Ser383 acts as the Charge relay system in catalysis.

This sequence belongs to the peptidase S1 family. As to quaternary structure, heterodimer of a light chain and a heavy chain linked by a disulfide bond. In terms of processing, the vitamin K-dependent, enzymatic carboxylation of some glutamate residues allows the modified protein to bind calcium. The iron and 2-oxoglutarate dependent 3-hydroxylation of aspartate and asparagine is (R) stereospecific within EGF domains. Post-translationally, O-glycosylated. O-fucosylated by POFUT1 on a conserved serine or threonine residue found in the consensus sequence C2-X(4,5)-[S/T]-C3 of EGF domains, where C2 and C3 are the second and third conserved cysteines. In terms of processing, can be either O-glucosylated or O-xylosylated at Ser-91 by POGLUT1. As to expression, plasma.

Its subcellular location is the secreted. The catalysed reaction is Selective cleavage of Arg-|-Ile bond in factor X to form factor Xa.. In terms of biological role, initiates the extrinsic pathway of blood coagulation. Serine protease that circulates in the blood in a zymogen form. Factor VII is converted to factor VIIa by factor Xa, factor XIIa, factor IXa, or thrombin by minor proteolysis. In the presence of tissue factor and calcium ions, factor VIIa then converts factor X to factor Xa by limited proteolysis. Factor VIIa also converts factor IX to factor IXa in the presence of tissue factor and calcium. In Oryctolagus cuniculus (Rabbit), this protein is Coagulation factor VII (F7).